The sequence spans 150 residues: AN1-type zinc finger protein TMC1 (150 aa).

Residues 1–82 (MSDINEIEIP…TKKTTKKKKK (82 aa)) are disordered. The residue at position 2 (serine 2) is an N-acetylserine. Over residues 23–33 (DPMHEIEDKST) the composition is skewed to basic and acidic residues. A phosphoserine mark is found at serine 43 and serine 54. Residues 53–70 (NSRSSSNSSVTSTGQSSR) are compositionally biased toward low complexity. Positions 71–82 (RVTKKTTKKKKK) are enriched in basic residues. The segment at 79–128 (KKKKNACYFDTCSSAASKFIGDCNFCKGHFCSKHRLMENHACNGLTSCKE) adopts an AN1-type zinc-finger fold. Positions 85, 90, 101, 104, 109, 112, 118, and 120 each coordinate Zn(2+).

The protein localises to the nucleus. Its function is as follows. May have a role in protecting cells from metalloid-induced proteotoxicity. This chain is AN1-type zinc finger protein TMC1, found in Saccharomyces cerevisiae (strain ATCC 204508 / S288c) (Baker's yeast).